The chain runs to 186 residues: Negative modulator of initiation of replication (186 aa).

Belongs to the SeqA family. Homodimer. Polymerizes to form helical filaments.

The protein resides in the cytoplasm. Its function is as follows. Negative regulator of replication initiation, which contributes to regulation of DNA replication and ensures that replication initiation occurs exactly once per chromosome per cell cycle. Binds to pairs of hemimethylated GATC sequences in the oriC region, thus preventing assembly of replication proteins and re-initiation at newly replicated origins. Repression is relieved when the region becomes fully methylated. The protein is Negative modulator of initiation of replication of Glaesserella parasuis serovar 5 (strain SH0165) (Haemophilus parasuis).